Consider the following 630-residue polypeptide: UvrABC system protein C (630 aa).

The disordered stretch occupies residues 1-96 (MGAEGLQGEG…GEAHRRGGTG (96 aa)). Residues 9–28 (EGEVPPQGAGVPGQVQVGVH) are compositionally biased toward low complexity. Residues 52–125 (DPRGLPVEAG…IKAHRPLYNV (74 aa)) enclose the GIY-YIG domain. The span at 75-91 (RPGEKLLPRRGQGEAHR) shows a compositional bias: basic and acidic residues. The 36-residue stretch at 234–269 (DGLLQELEAKMREAARRLEFERAAEIRDQMEALRAF) folds into the UVR domain.

The protein belongs to the UvrC family. In terms of assembly, interacts with UvrB in an incision complex.

Its subcellular location is the cytoplasm. Its function is as follows. The UvrABC repair system catalyzes the recognition and processing of DNA lesions. UvrC both incises the 5' and 3' sides of the lesion. The N-terminal half is responsible for the 3' incision and the C-terminal half is responsible for the 5' incision. The sequence is that of UvrABC system protein C from Thermus thermophilus (strain ATCC BAA-163 / DSM 7039 / HB27).